The primary structure comprises 385 residues: Branched-chain-amino-acid aminotransferase, cytosolic (385 aa).

N6-(pyridoxal phosphate)lysine is present on lysine 221.

Belongs to the class-IV pyridoxal-phosphate-dependent aminotransferase family. As to quaternary structure, homodimer. It depends on pyridoxal 5'-phosphate as a cofactor. As to expression, expressed in muscles.

Its subcellular location is the cytoplasm. The enzyme catalyses L-leucine + 2-oxoglutarate = 4-methyl-2-oxopentanoate + L-glutamate. It carries out the reaction L-isoleucine + 2-oxoglutarate = (S)-3-methyl-2-oxopentanoate + L-glutamate. It catalyses the reaction L-valine + 2-oxoglutarate = 3-methyl-2-oxobutanoate + L-glutamate. Its function is as follows. Catalyzes the first reaction in the catabolism of the essential branched chain amino acids leucine, isoleucine, and valine. The sequence is that of Branched-chain-amino-acid aminotransferase, cytosolic (BCAT1) from Ovis aries (Sheep).